Consider the following 238-residue polypeptide: Sugar fermentation stimulation protein homolog (238 aa).

This sequence belongs to the SfsA family.

The sequence is that of Sugar fermentation stimulation protein homolog from Shewanella denitrificans (strain OS217 / ATCC BAA-1090 / DSM 15013).